The chain runs to 131 residues: Glycine cleavage system H protein (131 aa).

The region spanning 24 to 106 (RVTVGISDHA…YGEGWMFVVE (83 aa)) is the Lipoyl-binding domain. An N6-lipoyllysine modification is found at Lys-65.

It belongs to the GcvH family. In terms of assembly, the glycine cleavage system is composed of four proteins: P, T, L and H. (R)-lipoate serves as cofactor.

Its function is as follows. The glycine cleavage system catalyzes the degradation of glycine. The H protein shuttles the methylamine group of glycine from the P protein to the T protein. The polypeptide is Glycine cleavage system H protein (Stenotrophomonas maltophilia (strain K279a)).